Here is a 144-residue protein sequence, read N- to C-terminus: UPF0299 membrane protein MS1271 (144 aa).

Transmembrane regions (helical) follow at residues 5–25 (IFLF…GEGI), 28–48 (LIPI…IGLT), 57–77 (VFFG…PVSV), and 92–112 (SLLI…GFLG).

The protein belongs to the UPF0299 family.

Its subcellular location is the cell inner membrane. This is UPF0299 membrane protein MS1271 from Mannheimia succiniciproducens (strain KCTC 0769BP / MBEL55E).